The primary structure comprises 1210 residues: Epidermal growth factor receptor (1210 aa).

An N-terminal signal peptide occupies residues 1-24 (MRPSGTAGAALLALLAALCPASRA). Topologically, residues 25-645 (LEEKKVCQGT…CARNGPKIPS (621 aa)) are extracellular. Cysteines 31 and 58 form a disulfide. The Approximate repeat unit spans residues 75–300 (DLSFLKTIQE…CVKKCPRNYV (226 aa)). N-linked (GlcNAc...) asparagine glycosylation is found at asparagine 128, asparagine 175, and asparagine 196. 13 disulfide bridges follow: cysteine 157/cysteine 187, cysteine 190/cysteine 199, cysteine 194/cysteine 207, cysteine 215/cysteine 223, cysteine 219/cysteine 231, cysteine 232/cysteine 240, cysteine 236/cysteine 248, cysteine 251/cysteine 260, cysteine 264/cysteine 291, cysteine 295/cysteine 307, cysteine 311/cysteine 326, cysteine 329/cysteine 333, and cysteine 337/cysteine 362. Residue serine 229 is modified to Phosphoserine. N-linked (GlcNAc...) asparagine glycosylation is found at asparagine 352, asparagine 361, asparagine 413, and asparagine 444. One copy of the Approximate repeat lies at 390-600 (QELDILKTVK…CVKTCPAGVM (211 aa)). Cystine bridges form between cysteine 470–cysteine 499, cysteine 506–cysteine 515, cysteine 510–cysteine 523, cysteine 526–cysteine 535, cysteine 539–cysteine 555, cysteine 558–cysteine 571, cysteine 562–cysteine 579, cysteine 582–cysteine 591, cysteine 595–cysteine 617, cysteine 620–cysteine 628, and cysteine 624–cysteine 636. Asparagine 528 carries N-linked (GlcNAc...) asparagine glycosylation. Asparagine 568 is a glycosylation site (N-linked (GlcNAc...) asparagine). A glycan (N-linked (GlcNAc...) asparagine) is linked at asparagine 603. The helical transmembrane segment at 646–668 (IATGMVGALLLLLVVALGIGLFM) threads the bilayer. At 669–1210 (RRRHIVRKRT…APQSSEFIGA (542 aa)) the chain is on the cytoplasmic side. Phosphothreonine; by PKC and PKD/PRKD1 is present on threonine 678. Residues 688–704 (LVEPLTPSGEAPNQALL) form an important for dimerization, phosphorylation and activation region. Threonine 693 carries the phosphothreonine; by PKD/PRKD1 modification. Serine 695 carries the post-translational modification Phosphoserine. One can recognise a Protein kinase domain in the interval 712-979 (FKKIKVLGSG…KMARDPQRYL (268 aa)). Lysine 716 participates in a covalent cross-link: Glycyl lysine isopeptide (Lys-Gly) (interchain with G-Cter in ubiquitin). 718–726 (LGSGAFGTV) is an ATP binding site. Lysine 737 participates in a covalent cross-link: Glycyl lysine isopeptide (Lys-Gly) (interchain with G-Cter in ubiquitin). An ATP-binding site is contributed by lysine 745. Lysine 745 bears the N6-(2-hydroxyisobutyryl)lysine mark. Glycyl lysine isopeptide (Lys-Gly) (interchain with G-Cter in ubiquitin) cross-links involve residues lysine 754 and lysine 757. 790–791 (TQ) serves as a coordination point for ATP. The active-site Proton acceptor is aspartate 837. Aspartate 855 contributes to the ATP binding site. Lysine 867 participates in a covalent cross-link: Glycyl lysine isopeptide (Lys-Gly) (interchain with G-Cter in ubiquitin). At tyrosine 869 the chain carries Phosphotyrosine. Residues lysine 929, lysine 960, and lysine 970 each participate in a glycyl lysine isopeptide (Lys-Gly) (interchain with G-Cter in ubiquitin) cross-link. A phosphoserine mark is found at serine 991 and serine 995. A phosphotyrosine; by autocatalysis mark is found at tyrosine 998 and tyrosine 1016. Phosphoserine occurs at positions 1026 and 1039. Threonine 1041 carries the phosphothreonine modification. The residue at position 1042 (serine 1042) is a Phosphoserine. Residue cysteine 1049 is the site of S-palmitoyl cysteine attachment. Phosphoserine is present on serine 1064. Residue tyrosine 1069 is modified to Phosphotyrosine. A phosphoserine mark is found at serine 1070, serine 1071, and serine 1081. Residues tyrosine 1092 and tyrosine 1110 each carry the phosphotyrosine; by autocatalysis modification. The segment at 1097–1137 (VPKRPAGSVQNPVYHNQPLNPAPSRDPHYQDPHSTAVGNPE) is disordered. Composition is skewed to polar residues over residues 1104-1115 (SVQNPVYHNQPL) and 1128-1137 (PHSTAVGNPE). Residue cysteine 1146 is the site of S-palmitoyl cysteine attachment. The residue at position 1166 (serine 1166) is a Phosphoserine. Phosphotyrosine; by autocatalysis is present on residues tyrosine 1172 and tyrosine 1197. Position 1199 is an omega-N-methylarginine (arginine 1199).

This sequence belongs to the protein kinase superfamily. Tyr protein kinase family. EGF receptor subfamily. In terms of assembly, binding of the ligand triggers homo- and/or heterodimerization of the receptor triggering its autophosphorylation. Heterodimer with ERBB2. Forms a complex with CCDC88A/GIV (via SH2-like regions) and GNAI3 which leads to enhanced EGFR signaling and triggering of cell migration; binding to CCDC88A requires autophosphorylation of the EGFR C-terminal region, and ligand stimulation is required for recruitment of GNAI3 to the complex. Interacts with ERRFI1; inhibits dimerization of the kinase domain and autophosphorylation. Part of a complex with ERBB2 and either PIK3C2A or PIK3C2B. Interacts with GRB2; an adapter protein coupling the receptor to downstream signaling pathways. Interacts with GAB2; involved in signaling downstream of EGFR. Interacts with STAT3; mediates EGFR downstream signaling in cell proliferation. Interacts with RIPK1; involved in NF-kappa-B activation. Interacts (autophosphorylated) with CBL, CBLB and CBLC; involved in EGFR ubiquitination and regulation; interaction with CBL is reduced in the presence of tensin TNS4. Interacts with SOCS5; regulates EGFR degradation through ELOC- and ELOB-mediated ubiquitination and proteasomal degradation. Interacts with PRMT5; methylates EGFR and enhances interaction with PTPN6. Interacts (phosphorylated) with PTPN6; inhibits EGFR-dependent activation of MAPK/ERK. Interacts with COPG1; essential for regulation of EGF-dependent nuclear transport of EGFR by retrograde trafficking from the Golgi to the ER. Interacts with TNK2; this interaction is dependent on EGF stimulation and kinase activity of EGFR. Interacts with PCNA; positively regulates PCNA. Interacts with PELP1. Interacts with MUC1. Interacts with AP2M1. Interacts with FER. May interact with EPS8; mediates EPS8 phosphorylation. Interacts (via SH2 domains) with GRB2, NCK1 and NCK2. Interacts with ATXN2. Interacts with GAREM1. Interacts (ubiquitinated) with ANKRD13A/B/D; the interaction is direct and may regulate EGFR internalization after EGF stimulation. Interacts with GPER1; the interaction occurs in an estrogen-dependent manner. Interacts (via C-terminal cytoplasmic kinase domain) with ZPR1 (via zinc fingers). Interacts with RNF115 and RNF126. Interacts with GPRC5A (via its transmembrane domain). Interacts with FAM83B; positively regulates EGFR inducing its autophosphorylation in absence of stimulation by EGF. Interacts with LAPTM4B; positively correlates with EGFR activation. Interacts with STX19. Interacts with CD44. Interacts with PGRMC1; the interaction requires PGRMC1 homodimerization. Interacts with PIKFYVE. Interacts with NEU3. Interacts with TRAF4. Interacts with the ant venom OMEGA-myrmeciitoxin(02)-Mg1a. Interacts with CD82; this interaction facilitates ligand-induced endocytosis of the receptor and its subsequent desensitization. Phosphorylated on Tyr residues in response to EGF. Phosphorylation at Ser-695 is partial and occurs only if Thr-693 is phosphorylated. Phosphorylation at Thr-678 and Thr-693 by PRKD1 inhibits EGF-induced MAPK8/JNK1 activation. Dephosphorylation by PTPRJ prevents endocytosis and stabilizes the receptor at the plasma membrane. Autophosphorylation at Tyr-1197 is stimulated by methylation at Arg-1199 and enhances interaction with PTPN6. Autophosphorylation at Tyr-1092 and/or Tyr-1110 recruits STAT3. Dephosphorylated by PTPN1 and PTPN2. Post-translationally, monoubiquitinated and polyubiquitinated upon EGF stimulation; which does not affect tyrosine kinase activity or signaling capacity but may play a role in lysosomal targeting. Polyubiquitin linkage is mainly through 'Lys-63', but linkage through 'Lys-48', 'Lys-11' and 'Lys-29' also occurs. Deubiquitination by OTUD7B prevents degradation. Ubiquitinated by RNF115 and RNF126. Ubiquitinated by ZNRF1 or CBL at different lysines in response to EGF stimulation; leading to recruitment of the ESCRT machinery and subsequent degradation in the lysosomes. Deubiquitinated by UCHL1 leading to the inhibition of its degradation. In terms of processing, palmitoylated on Cys residues by ZDHHC20. Palmitoylation inhibits internalization after ligand binding, and increases the persistence of tyrosine-phosphorylated EGFR at the cell membrane. Palmitoylation increases the amplitude and duration of EGFR signaling. Methylated. Methylation at Arg-1199 by PRMT5 stimulates phosphorylation at Tyr-1197. As to expression, hypothalamus.

Its subcellular location is the cell membrane. It localises to the endoplasmic reticulum membrane. It is found in the golgi apparatus membrane. The protein resides in the nucleus membrane. The protein localises to the endosome. Its subcellular location is the endosome membrane. It localises to the nucleus. The enzyme catalyses L-tyrosyl-[protein] + ATP = O-phospho-L-tyrosyl-[protein] + ADP + H(+). Endocytosis and inhibition of the activated EGFR by phosphatases like PTPRJ and PTPRK constitute immediate regulatory mechanisms. Upon EGF-binding phosphorylates EPS15 that regulates EGFR endocytosis and activity. Moreover, inducible feedback inhibitors including LRIG1, SOCS4, SOCS5 and ERRFI1 constitute alternative regulatory mechanisms for the EGFR signaling. In terms of biological role, receptor tyrosine kinase binding ligands of the EGF family and activating several signaling cascades to convert extracellular cues into appropriate cellular responses. Known ligands include EGF, TGFA/TGF-alpha, AREG, epigen/EPGN, BTC/betacellulin, epiregulin/EREG and HBEGF/heparin-binding EGF. Ligand binding triggers receptor homo- and/or heterodimerization and autophosphorylation on key cytoplasmic residues. The phosphorylated receptor recruits adapter proteins like GRB2 which in turn activates complex downstream signaling cascades. Activates at least 4 major downstream signaling cascades including the RAS-RAF-MEK-ERK, PI3 kinase-AKT, PLCgamma-PKC and STATs modules. May also activate the NF-kappa-B signaling cascade. Also directly phosphorylates other proteins like RGS16, activating its GTPase activity and probably coupling the EGF receptor signaling to the G protein-coupled receptor signaling. Also phosphorylates MUC1 and increases its interaction with SRC and CTNNB1/beta-catenin. Positively regulates cell migration via interaction with CCDC88A/GIV which retains EGFR at the cell membrane following ligand stimulation, promoting EGFR signaling which triggers cell migration. Plays a role in enhancing learning and memory performance. Plays a role in mammalian pain signaling (long-lasting hypersensitivity). The chain is Epidermal growth factor receptor (EGFR) from Macaca mulatta (Rhesus macaque).